The chain runs to 574 residues: Optineurin (574 aa).

The tract at residues 1 to 33 (MSHQPLSCLTEKGDSPTETTGNGPPTLAHPNLD) is disordered. The stretch at 38 to 170 (HELLQQMREL…VSELQLKLNS (133 aa)) forms a coiled coil. An interaction with Rab8 region spans residues 58-209 (MKLNNQAMKG…GPIRTDSIDT (152 aa)). The LIR motif lies at 176–181 (DSFVEI). Phosphoserine; by TBK1 is present on Ser-177. Ser-198 carries the phosphoserine modification. Positions 233 to 496 (CLREGNQKVE…ALQLAVLLKD (264 aa)) form a coiled coil. Positions 262–286 (AKDRSETETQTEEHKEQEKEEEKSP) are enriched in basic and acidic residues. The interval 262-292 (AKDRSETETQTEEHKEQEKEEEKSPETVGSE) is disordered. Ser-336 is subject to Phosphoserine. Positions 405 to 574 (KRRESEKVDK…LLIHVTDCII (170 aa)) are interaction with HD. Residues 406–515 (RRESEKVDKV…RQSLMEMQSR (110 aa)) form an interaction with MYO6 region. Positions 468–473 (DFHAER) match the UBAN motif. At Ser-521 the chain carries Phosphoserine. A CCHC NOA-type zinc finger spans residues 544 to 574 (QQNIPIHSCPKCGEVLPDIDTLLIHVTDCII). 4 residues coordinate Zn(2+): Cys-552, Cys-555, His-568, and Cys-572.

As to quaternary structure, self-associates. Interacts with HD. Interacts with GTF3A. Interacts with MYO6. Interacts (via UBAN) with ubiquitinated TFRC. Interacts with GTP-bound Rab8 (RAB8A and/or RAB8B). Interacts with TBC1D17. Interacts with TBK1. Interacts with TRAF3. Binds to linear ubiquitin chains. Interacts with LC3 family members MAP1LC3A, MAP1LC3B, GABARAP, GABARAPL1 and GABARAPL2; OPTN phosphorylation increases the association (at least with MAP1LC3B). Interacts with RAB12; the interaction may be indirect. Interacts with TBK1; this interaction leads to the Golgi localization of TBK1 and its subsequent activation. Interacts with palmitoyltransferase ZDHHC17/HIP14; the interaction does not lead to palmitoylation of OPTN. Interacts with CYLD. Interacts with TOM1; the interaction is indirect and is mediated by MYO6, which acts as a bridge between TOM1 and OPTN. Interacts with USP12; the interaction is independent of USP12 deubiquitinase activity and may be involved in regulation of autophagic flux. Phosphorylated by TBK1, leading to restrict bacterial proliferation in case of infection. Present in aqueous humor of the eye (at protein level). Expressed in trabecular meshwork and astrocytes.

The protein resides in the cytoplasm. The protein localises to the perinuclear region. It is found in the golgi apparatus. It localises to the trans-Golgi network. Its subcellular location is the cytoplasmic vesicle. The protein resides in the autophagosome. The protein localises to the recycling endosome. Plays an important role in the maintenance of the Golgi complex, in membrane trafficking, in exocytosis, through its interaction with myosin VI and Rab8. Links myosin VI to the Golgi complex and plays an important role in Golgi ribbon formation. Negatively regulates the induction of IFNB in response to RNA virus infection. Plays a neuroprotective role in the eye and optic nerve. Probably part of the TNF-alpha signaling pathway that can shift the equilibrium toward induction of cell death. May act by regulating membrane trafficking and cellular morphogenesis via a complex that contains Rab8 and huntingtin (HD). Mediates the interaction of Rab8 with the probable GTPase-activating protein TBC1D17 during Rab8-mediated endocytic trafficking, such as that of transferrin receptor (TFRC/TfR); regulates Rab8 recruitment to tubules emanating from the endocytic recycling compartment. Autophagy receptor that interacts directly with both the cargo to become degraded and an autophagy modifier of the MAP1 LC3 family; targets ubiquitin-coated bacteria (xenophagy) and appears to function in the same pathway as SQSTM1 and CALCOCO2/NDP52. This Sus scrofa (Pig) protein is Optineurin (OPTN).